Here is a 29-residue protein sequence, read N- to C-terminus: Protamine-like protein (29 aa).

Residues 1-29 (MRSFDQGSTRAPARERCRRQRPEGRSAQR) form a disordered region. The segment covering 12 to 29 (PARERCRRQRPEGRSAQR) has biased composition (basic and acidic residues).

The sequence is that of Protamine-like protein (tpr) from Escherichia coli (strain K12).